Here is a 446-residue protein sequence, read N- to C-terminus: High mobility group B protein 13 (446 aa).

2 disordered regions span residues 1–43 and 110–130; these read MSTV…TKSF and LAQT…AETK. A compositionally biased stretch (basic residues) spans 11-22; it reads AKKSRNSRKALK. 2 consecutive DNA-binding regions (HMG box) follow at residues 129 to 197 and 246 to 312; these read TKRP…TKEK and PKQP…EGYK. The segment covering 349–371 has biased composition (basic and acidic residues); sequence NIIKKTKETAKNKKKNENVDPNK. Residues 349-377 are disordered; the sequence is NIIKKTKETAKNKKKNENVDPNKPKKPTS. The segment at residues 372–440 is a DNA-binding region (HMG box 3); it reads PKKPTSSYFL…AYKKEVEEYN (69 aa).

The protein belongs to the HMGB family.

Its subcellular location is the nucleus. The sequence is that of High mobility group B protein 13 (HMGB13) from Arabidopsis thaliana (Mouse-ear cress).